Here is a 1700-residue protein sequence, read N- to C-terminus: MELSCSEVPLYGQRTVYAKFGKNVYLPEDAEFYFIYDGSHQRHVVIADRVEDNVLQSIIPGHWLQETVMVSVCLCSEGYSPVTMGSGSVTYVDNMACRLARLLVTQADRLTPCSHQTLLTPFALTAEALPALDEELVLALTQLELPLGWTVLGNSSLEVCLHRESLLHLAVRWALPKLFHFLLCLPGGVKALELPNEEATTPLDLALHGGHSMLVEDISNFQGRRSPGFSRLRLNEDATLQFDRSSETLTLTVNHTAEHLLEADIKLFRKYFWDRAFLVKALDQEAKTERATMPSGAAETEEEVRNLESGRSPSEEEEDGQLVKSQADGPSEQEDQDRLVLDHSFDGLKKSKHAPASLAAGQLSDVPNGGDEVYANCMVIDQVGDLDINYINIEGLSTHTSPESMRSTLGPQACKHILPPDTSPCGHLLCEDSDRTLDAAASQSCMSPPSSHTSNLNLSFGLHGFVKEQSHLKKRSSSLDALVADSEEEGRSEPPICYAVGSQSSPRTGLPGGDELDSFDANTEPDCNISRTESLSLSSTLHSKESLLSGIRSRSYSCSSPKISSGKSRLVRDFTVCSSSEEQRSYSFQEPPGEKRIQEEEWDDYIIPAKAESEKHKVSRTFSFLMNRMTSPRNKSKMKNKDTKDKEKLNRHQFVPGTFSGVLQCSGCDKTLLGKESLQCANCKANTHKGCKDTVPPCTKKFQDKYNKNKPQTILGSSSVRDVPPPGLSLHPSPSMPIGLPAGRKETAGQAHPLSRSVPGTTLESFRRAVTSLESEGDSNSWRSRSHSDELFQSMGSSPSTESFMMEDVVDSSLWSELSSDAQEFEAESWSLVVDPSFCSRQEKDVIKRQDVIFELMQTEVHHIQTLLIMSEVFRKGMKEELQLDHSTVDRIFPCLDELLETHKHFFFSMKERRQESCTGNDRNFVINQIGDILVQQFSEENASKMKRIYGDFCSHHKEAMSLFKELQQNKKFQNFIKIRNSNLLARRRGIPECILLVTQRITKYPVLVERILQYTKERTEEHRDLCRALGLIKDMIAAVDLKVSEYEKNQKWLEILNKIENKTYTKLKNGHVFRKQALMSQERALLHDGLVYWKTATGRFKDILALLLTDVLLFLQEKDQKYIFAAVDQKPSVISLQKLIAREVANEERGMFLISASSAGPEMYEIHTSSKEERNNWMRRIQQAVESCPEEEGGRTSESDEERRKADARVAKIQQCQEILSNQDQQICTYLEEKLHIYAELGELSGFEDVHLEPHLLIKPDPGEPPQAASLLAAALREAESLQVAVKASKLADVSQPSEEGPGGAVLADTLSAQDAPASPTAFTEGTEGRGCWDVDPRLQGVVTDLAVSDAGEKVEYRSFSGSSQSEIIQAIQNLTRLLYSLQAALTIQDSHIEIHKLVLQQQESLAPSHSFRGGPLQDQEKSRYLEKHREELANIHKLQYQFQQEQRRWHRTCDQQQREQEAQESWLQARERECQSQEELLLRHRSELDHQLQEYQQNLERLREGQRMVERERQRMRDQQGLLGHCKHSRQRSLPAVFSPGSKEVTELNRAESLCHEKSFFLNDAFTHMSLNTSNKPNPSGAPWDAHPPGGSHLDLARTSDSQIEVKMDVSQPSDVNSELWTTGLGPQRPARQESIKDSCKNVADLNSFQTESPDPQDSNQRGPQPQTLITEAKLTPPMAAGHGGDAGDGAEENIVYL.

The disordered stretch occupies residues 288 to 335; sequence TERATMPSGAAETEEEVRNLESGRSPSEEEEDGQLVKSQADGPSEQED. A phosphoserine mark is found at Ser312, Ser314, and Ser478. Residues 483–525 are disordered; sequence VADSEEEGRSEPPICYAVGSQSSPRTGLPGGDELDSFDANTEP. Ser623 is modified (phosphoserine). The Phorbol-ester/DAG-type zinc finger occupies 651 to 698; the sequence is RHQFVPGTFSGVLQCSGCDKTLLGKESLQCANCKANTHKGCKDTVPPC. Polar residues predominate over residues 709–720; sequence NKPQTILGSSSV. Disordered regions lie at residues 709–761 and 774–799; these read NKPQ…VPGT and ESEG…GSSP. The segment covering 728–737 has biased composition (low complexity); sequence LSLHPSPSMP. Polar residues predominate over residues 774 to 783; sequence ESEGDSNSWR. The 196-residue stretch at 848–1043 folds into the DH domain; it reads KRQDVIFELM…KDMIAAVDLK (196 aa). One can recognise a PH domain in the interval 1085 to 1187; sequence ALLHDGLVYW…WMRRIQQAVE (103 aa). The disordered stretch occupies residues 1186–1207; sequence VESCPEEEGGRTSESDEERRKA. Over residues 1193-1207 the composition is skewed to basic and acidic residues; it reads EGGRTSESDEERRKA. The tract at residues 1294 to 1303 is interaction with PTK2/FAK1; required for regulation of axonal branching and synapse formation; it reads DVSQPSEEGP. Residues 1369-1380 form a mediates cytoplasmic retention and interaction with YWHAH region; that stretch reads IIQAIQNLTRLL. The interval 1421–1700 is interaction with microtubules; the sequence is QEKSRYLEKH…DGAEENIVYL (280 aa). The stretch at 1473 to 1522 forms a coiled coil; that stretch reads ERECQSQEELLLRHRSELDHQLQEYQQNLERLREGQRMVERERQRMRDQQ. The segment at 1493-1524 is RNA-binding; sequence QLQEYQQNLERLREGQRMVERERQRMRDQQGL. Ser1535 carries the post-translational modification Phosphoserine. The tract at residues 1563-1576 is mediates cytoplasmic retention and interaction with MAPK8IP1; sequence FLNDAFTHMSLNTS. The tract at residues 1574–1598 is disordered; the sequence is NTSNKPNPSGAPWDAHPPGGSHLDL. Ser1604 bears the Phosphoserine mark. A disordered region spans residues 1612-1700; the sequence is VSQPSDVNSE…DGAEENIVYL (89 aa). The segment covering 1613–1623 has biased composition (polar residues); it reads SQPSDVNSELW. Basic and acidic residues predominate over residues 1633–1642; that stretch reads ARQESIKDSC. Positions 1647-1672 are enriched in polar residues; that stretch reads DLNSFQTESPDPQDSNQRGPQPQTLI.

As to quaternary structure, homooligomer; forms cytoplasmic aggregates. Forms a complex with MAPK8 and MAPK8IP1. Interacts with RHOA. Interacts with microtubules. Interacts with YWHAE and YWHAH. Interacts with PTK2/FAK1. Interacts with NEFL. Interacts with CTNND2; prevents interaction with RHOA. Post-translationally, phosphorylated on tyrosine upon stimulation of cells by laminin.

The protein resides in the cytoplasm. Its subcellular location is the cell membrane. In terms of biological role, functions as a RHOA-specific guanine nucleotide exchange factor regulating signaling pathways downstream of integrins and growth factor receptors. Functions in axonal branching, synapse formation and dendritic morphogenesis. Also functions in focal adhesion formation, cell motility and B-lymphocytes activation. May regulate NEFL expression and aggregation and play a role in apoptosis. The sequence is that of Rho guanine nucleotide exchange factor 28 (Arhgef28) from Rattus norvegicus (Rat).